Consider the following 248-residue polypeptide: PACRG-like protein (248 aa).

The residue at position 1 (Met1) is an N-acetylmethionine. A disordered region spans residues 1-72; sequence MQRSECSGGV…NPKTINPFGE (72 aa). Composition is skewed to polar residues over residues 14–29 and 36–45; these read NRAT…SSTQ and VQRSKSSSLT. Ser47 bears the Phosphoserine mark.

This is PACRG-like protein (Pacrgl) from Mus musculus (Mouse).